The primary structure comprises 229 residues: Potassium/proton antiporter CemA (229 aa).

Helical transmembrane passes span 7–27 (FNPLLYLTSIVFLSWSISFSF), 107–127 (ILNFLTNIISFAILSVFYILG), 154–174 (ILLLTDLCIGFHSPHGWELMI), and 189–209 (IISGLVSTFPVILDTIFKYLI).

Belongs to the CemA family.

The protein localises to the plastid. It is found in the chloroplast inner membrane. It catalyses the reaction K(+)(in) + H(+)(out) = K(+)(out) + H(+)(in). Functionally, contributes to K(+)/H(+) antiport activity by supporting proton efflux to control proton extrusion and homeostasis in chloroplasts in a light-dependent manner to modulate photosynthesis. Prevents excessive induction of non-photochemical quenching (NPQ) under continuous-light conditions. Indirectly promotes efficient inorganic carbon uptake into chloroplasts. This chain is Potassium/proton antiporter CemA, found in Ranunculus macranthus (Large buttercup).